We begin with the raw amino-acid sequence, 357 residues long: UDP-N-acetylglucosamine--N-acetylmuramyl-(pentapeptide) pyrophosphoryl-undecaprenol N-acetylglucosamine transferase (357 aa).

UDP-N-acetyl-alpha-D-glucosamine contacts are provided by residues 13 to 15 (TGG), N125, R161, S189, I243, and Q288.

Belongs to the glycosyltransferase 28 family. MurG subfamily.

It localises to the cell inner membrane. It catalyses the reaction di-trans,octa-cis-undecaprenyl diphospho-N-acetyl-alpha-D-muramoyl-L-alanyl-D-glutamyl-meso-2,6-diaminopimeloyl-D-alanyl-D-alanine + UDP-N-acetyl-alpha-D-glucosamine = di-trans,octa-cis-undecaprenyl diphospho-[N-acetyl-alpha-D-glucosaminyl-(1-&gt;4)]-N-acetyl-alpha-D-muramoyl-L-alanyl-D-glutamyl-meso-2,6-diaminopimeloyl-D-alanyl-D-alanine + UDP + H(+). The protein operates within cell wall biogenesis; peptidoglycan biosynthesis. In terms of biological role, cell wall formation. Catalyzes the transfer of a GlcNAc subunit on undecaprenyl-pyrophosphoryl-MurNAc-pentapeptide (lipid intermediate I) to form undecaprenyl-pyrophosphoryl-MurNAc-(pentapeptide)GlcNAc (lipid intermediate II). This is UDP-N-acetylglucosamine--N-acetylmuramyl-(pentapeptide) pyrophosphoryl-undecaprenol N-acetylglucosamine transferase from Bordetella petrii (strain ATCC BAA-461 / DSM 12804 / CCUG 43448).